A 165-amino-acid chain; its full sequence is GTPase activating protein 1 (165 aa).

Residues 1–105 (MLGHLVGLVK…VVKMKIEGVA (105 aa)) form the C2 domain. 7 residues coordinate Ca(2+): R22, D23, D28, D74, K75, D76, and D81.

The protein belongs to the plant CAR protein family. As to quaternary structure, binds to PYR/PYL/RCAR abscisic acid intracellular receptors in an ABA-independent manner, both at the plasma membrane and in the nucleus. Binds phospholipids in a Ca(2+)-dependent manner. Interacts with YchF1.

It localises to the cell membrane. Its subcellular location is the nucleus. The protein localises to the cytoplasm. The protein resides in the cytosol. Functionally, mediates the transient calcium-dependent interaction of PYR/PYL/RCAR abscisic acid (ABA) receptors with the plasma membrane and thus regulates ABA sensitivity. Stimulates the GTPase/ATPase activities of YchF1, and regulates its subcellular localization. Promotes tolerance towards salinity stress by limiting the accumulation of reactive oxygen species (ROS). Promotes resistance to bacterial pathogens. This chain is GTPase activating protein 1, found in Oryza sativa subsp. indica (Rice).